Here is a 182-residue protein sequence, read N- to C-terminus: Gremlin-1 (182 aa).

Positions 1–24 are cleaved as a signal peptide; the sequence is MNCLVYALGSLFLLSGLLLPSSEG. The disordered stretch occupies residues 23–65; it reads EGKKKVSGSQGAIPPPDKGQPNDSEQGQAQPGDRVRGKGKGQA. An N-linked (GlcNAc...) asparagine glycan is attached at Asn44. Cystine bridges form between Cys92–Cys142, Cys106–Cys156, Cys116–Cys174, and Cys120–Cys176. The CTCK domain maps to 92 to 182; that stretch reads CKTQPLKQTI…QCRCISIDLD (91 aa).

It belongs to the DAN family.

The protein localises to the secreted. Functionally, cytokine that has an axial patterning activity. Acts like BMP antagonist in embryonic explants. Blocks the BMP2 activity. The polypeptide is Gremlin-1 (grem1) (Xenopus laevis (African clawed frog)).